The primary structure comprises 310 residues: 26S proteasome non-ATPase regulatory subunit 7 homolog B (310 aa).

Methionine 1 carries the post-translational modification N-acetylmethionine. The 138-residue stretch at 17–154 (VIVHPLVLLS…YYAVEEVKEN (138 aa)) folds into the MPN domain.

Belongs to the peptidase M67A family. As to quaternary structure, component of the 19S regulatory particle (RP/PA700) lid subcomplex of the 26S proteasome. The 26S proteasome is composed of a core protease (CP), known as the 20S proteasome, capped at one or both ends by the 19S regulatory particle (RP/PA700). The RP/PA700 complex is composed of at least 17 different subunits in two subcomplexes, the base and the lid, which form the portions proximal and distal to the 20S proteolytic core, respectively.

Acts as a regulatory subunit of the 26S proteasome which is involved in the ATP-dependent degradation of ubiquitinated proteins. This chain is 26S proteasome non-ATPase regulatory subunit 7 homolog B (RPN8B), found in Arabidopsis thaliana (Mouse-ear cress).